A 354-amino-acid polypeptide reads, in one-letter code: UDP-3-O-acylglucosamine N-acyltransferase (354 aa).

Histidine 258 serves as the catalytic Proton acceptor.

It belongs to the transferase hexapeptide repeat family. LpxD subfamily. In terms of assembly, homotrimer.

The catalysed reaction is a UDP-3-O-[(3R)-3-hydroxyacyl]-alpha-D-glucosamine + a (3R)-hydroxyacyl-[ACP] = a UDP-2-N,3-O-bis[(3R)-3-hydroxyacyl]-alpha-D-glucosamine + holo-[ACP] + H(+). The protein operates within bacterial outer membrane biogenesis; LPS lipid A biosynthesis. Its function is as follows. Catalyzes the N-acylation of UDP-3-O-acylglucosamine using 3-hydroxyacyl-ACP as the acyl donor. Is involved in the biosynthesis of lipid A, a phosphorylated glycolipid that anchors the lipopolysaccharide to the outer membrane of the cell. This is UDP-3-O-acylglucosamine N-acyltransferase from Rhizobium meliloti (strain 1021) (Ensifer meliloti).